We begin with the raw amino-acid sequence, 120 residues long: Large ribosomal subunit protein eL18 (120 aa).

Belongs to the eukaryotic ribosomal protein eL18 family.

In Methanococcus maripaludis (strain DSM 14266 / JCM 13030 / NBRC 101832 / S2 / LL), this protein is Large ribosomal subunit protein eL18.